Consider the following 89-residue polypeptide: Small ribosomal subunit protein uS15 (89 aa).

The protein belongs to the universal ribosomal protein uS15 family. As to quaternary structure, part of the 30S ribosomal subunit. Forms a bridge to the 50S subunit in the 70S ribosome, contacting the 23S rRNA.

One of the primary rRNA binding proteins, it binds directly to 16S rRNA where it helps nucleate assembly of the platform of the 30S subunit by binding and bridging several RNA helices of the 16S rRNA. Functionally, forms an intersubunit bridge (bridge B4) with the 23S rRNA of the 50S subunit in the ribosome. The protein is Small ribosomal subunit protein uS15 of Marinomonas sp. (strain MWYL1).